Consider the following 911-residue polypeptide: SH3 and PX domain-containing protein 2B (911 aa).

The PX domain maps to 5 to 129 (RSIVEVKVLD…QFFETRPEDL (125 aa)). Tyrosine 25 is modified (phosphotyrosine). SH3 domains lie at 152–211 (MVLE…GQDG) and 221–280 (EEEE…KNSG). The interval 275-366 (LKKNSGEPLP…GLNLPKPPIP (92 aa)) is disordered. Serine 279 and serine 291 each carry phosphoserine. The span at 282 to 292 (PLPPKPGPGSP) shows a compositional bias: pro residues. Over residues 311–337 (GREKELLSSQRDGRFEGRPVPDGDAKQ) the composition is skewed to basic and acidic residues. Basic residues predominate over residues 338 to 347 (RSPKMRQRPP). One can recognise an SH3 3 domain in the interval 368-427 (QVEEEYYTIAEFQTTIPDGISFQAGLKVEVIEKNLSGWWYIQIEDKEGWAPATFIDKYKK). Residues 458-834 (NTGSEATGPS…GPWGTGKIGE (377 aa)) form a disordered region. Composition is skewed to basic and acidic residues over residues 486-499 (KDWK…RKAS), 517-548 (EEKP…RTEQ), 571-586 (PARD…DKSR), 598-609 (CGHKVLAKEVKK), and 618-628 (SKTDLPEEKPD). Serine 499 and serine 528 each carry phosphoserine. Composition is skewed to pro residues over residues 643-653 (RPKPAPSPKTE) and 756-766 (VVPPRRPPPPK). A compositionally biased stretch (gly residues) spans 822–831 (GSLGPWGTGK). Serine 843 bears the Phosphoserine mark. The SH3 4 domain occupies 850 to 911 (LKDSLYVAVA…IPSNYLRKKP (62 aa)).

Belongs to the SH3PXD2 family. Interacts with ADAM15. Interacts with NOXO1. Interacts (via SH3 domains) with NOXA1; the interaction is direct. Interacts with FASLG. Post-translationally, phosphorylated in SRC-transformed cells. Expressed in fibroblasts.

The protein localises to the cytoplasm. Its subcellular location is the cell projection. The protein resides in the podosome. Its function is as follows. Adapter protein involved in invadopodia and podosome formation and extracellular matrix degradation. Binds matrix metalloproteinases (ADAMs), NADPH oxidases (NOXs) and phosphoinositides. Acts as an organizer protein that allows NOX1- or NOX3-dependent reactive oxygen species (ROS) generation and ROS localization. Plays a role in mitotic clonal expansion during the immediate early stage of adipocyte differentiation. This is SH3 and PX domain-containing protein 2B (SH3PXD2B) from Homo sapiens (Human).